Here is a 141-residue protein sequence, read N- to C-terminus: Photosystem I reaction center subunit IV A, chloroplastic (141 aa).

The transit peptide at 1 to 49 (MASCNMASAASNFLVATPNVASNTNTSRTTMLFFSSKNYGSTAPRLVVR) directs the protein to the chloroplast. Low complexity predominate over residues 57–73 (PAAAATAEPAEAPVKAA). The segment at 57–83 (PAAAATAEPAEAPVKAAKPPPIGPKRG) is disordered.

It belongs to the PsaE family. Post-translationally, 2 isoforms exists (ratio 1:1). With or without the N-terminal alanine.

It is found in the plastid. Its subcellular location is the chloroplast thylakoid membrane. In terms of biological role, stabilizes the interaction between PsaC and the PSI core, assists the docking of the ferredoxin to PSI and interacts with ferredoxin-NADP oxidoreductase. This is Photosystem I reaction center subunit IV A, chloroplastic (PSAEA) from Nicotiana sylvestris (Wood tobacco).